Here is a 504-residue protein sequence, read N- to C-terminus: Maturase K (504 aa).

This sequence belongs to the intron maturase 2 family. MatK subfamily.

The protein resides in the plastid. Its subcellular location is the chloroplast. Functionally, usually encoded in the trnK tRNA gene intron. Probably assists in splicing its own and other chloroplast group II introns. The polypeptide is Maturase K (Capsella bursa-pastoris (Shepherd's purse)).